The following is a 110-amino-acid chain: Insulin-2 (110 aa).

An N-terminal signal peptide occupies residues 1–24; that stretch reads MALWMRFLPLLALLFLWESHPTQA. 3 cysteine pairs are disulfide-bonded: cysteine 31–cysteine 96, cysteine 43–cysteine 109, and cysteine 95–cysteine 100. Residues 57 to 87 constitute a propeptide, c peptide; the sequence is EVEDPQVAQLELGGGPGAGDLQTLALEVAQQ.

This sequence belongs to the insulin family. As to quaternary structure, heterodimer of a B chain and an A chain linked by two disulfide bonds.

Its subcellular location is the secreted. Functionally, insulin decreases blood glucose concentration. It increases cell permeability to monosaccharides, amino acids and fatty acids. It accelerates glycolysis, the pentose phosphate cycle, and glycogen synthesis in liver. The polypeptide is Insulin-2 (Ins2) (Mus musculus (Mouse)).